The chain runs to 234 residues: Uracil-DNA glycosylase (234 aa).

D68 (proton acceptor) is an active-site residue.

Belongs to the uracil-DNA glycosylase (UDG) superfamily. UNG family.

It localises to the cytoplasm. It carries out the reaction Hydrolyzes single-stranded DNA or mismatched double-stranded DNA and polynucleotides, releasing free uracil.. In terms of biological role, excises uracil residues from the DNA which can arise as a result of misincorporation of dUMP residues by DNA polymerase or due to deamination of cytosine. This is Uracil-DNA glycosylase from Ruegeria sp. (strain TM1040) (Silicibacter sp.).